The following is a 174-amino-acid chain: Crossover junction endodeoxyribonuclease RuvC (174 aa).

Active-site residues include aspartate 8, glutamate 67, and aspartate 139. 3 residues coordinate Mg(2+): aspartate 8, glutamate 67, and aspartate 139.

The protein belongs to the RuvC family. Homodimer which binds Holliday junction (HJ) DNA. The HJ becomes 2-fold symmetrical on binding to RuvC with unstacked arms; it has a different conformation from HJ DNA in complex with RuvA. In the full resolvosome a probable DNA-RuvA(4)-RuvB(12)-RuvC(2) complex forms which resolves the HJ. Requires Mg(2+) as cofactor.

It is found in the cytoplasm. It catalyses the reaction Endonucleolytic cleavage at a junction such as a reciprocal single-stranded crossover between two homologous DNA duplexes (Holliday junction).. Its function is as follows. The RuvA-RuvB-RuvC complex processes Holliday junction (HJ) DNA during genetic recombination and DNA repair. Endonuclease that resolves HJ intermediates. Cleaves cruciform DNA by making single-stranded nicks across the HJ at symmetrical positions within the homologous arms, yielding a 5'-phosphate and a 3'-hydroxyl group; requires a central core of homology in the junction. The consensus cleavage sequence is 5'-(A/T)TT(C/G)-3'. Cleavage occurs on the 3'-side of the TT dinucleotide at the point of strand exchange. HJ branch migration catalyzed by RuvA-RuvB allows RuvC to scan DNA until it finds its consensus sequence, where it cleaves and resolves the cruciform DNA. The chain is Crossover junction endodeoxyribonuclease RuvC from Pseudomonas entomophila (strain L48).